The chain runs to 918 residues: Glutamate receptor 2.5 (918 aa).

The N-terminal stretch at 1-30 (MSLFHHLVSRFLSLWLLIFLVFLVLSLGKS) is a signal peptide. Residues 31–586 (QKEALQVKVG…WVFLKPLTKE (556 aa)) are Extracellular-facing. Residues N46, N58, N122, N336, N340, and N546 are each glycosylated (N-linked (GlcNAc...) asparagine). The helical transmembrane segment at 587 to 607 (LWLVTAASFLYIGIMVWIFEY) threads the bilayer. Topologically, residues 608–616 (QADEEFREQ) are cytoplasmic. Residues 617–637 (MIIDKISSVFYFSFSTLFFAH) form a helical membrane-spanning segment. Residues 638–647 (RRPSESFFTR) lie on the Cytoplasmic side of the membrane. A helical transmembrane segment spans residues 648–668 (VLVVVWCFVLLILTQSYTATL). The Extracellular portion of the chain corresponds to 669–828 (TSMLTVQELR…DSPIQLDHHS (160 aa)). N791 carries N-linked (GlcNAc...) asparagine glycosylation. The helical transmembrane segment at 829-849 (FEALFLIVFVVSVILLLLMLA) threads the bilayer. At 850–918 (SRGYQERQHN…VAPLSRLKSA (69 aa)) the chain is on the cytoplasmic side. Residues 857–881 (QHNASPNLPNDQANAAQEEVNEEGN) are disordered. The span at 866–881 (NDQANAAQEEVNEEGN) shows a compositional bias: low complexity.

It belongs to the glutamate-gated ion channel (TC 1.A.10.1) family. In terms of assembly, may form heteromers. Expressed predominantly in roots.

Its subcellular location is the membrane. In terms of biological role, glutamate-gated receptor that probably acts as a non-selective cation channel. May be involved in light-signal transduction and calcium homeostasis via the regulation of calcium influx into cells. This chain is Glutamate receptor 2.5 (GLR2.5), found in Arabidopsis thaliana (Mouse-ear cress).